A 78-amino-acid chain; its full sequence is Translational regulator CsrA (78 aa).

The protein belongs to the CsrA/RsmA family. As to quaternary structure, homodimer; the beta-strands of each monomer intercalate to form a hydrophobic core, while the alpha-helices form wings that extend away from the core.

Its subcellular location is the cytoplasm. Functionally, a translational regulator that binds mRNA to regulate translation initiation and/or mRNA stability. Usually binds in the 5'-UTR at or near the Shine-Dalgarno sequence preventing ribosome-binding, thus repressing translation. Its main target seems to be the major flagellin gene, while its function is anatagonized by FliW. The protein is Translational regulator CsrA of Geobacter metallireducens (strain ATCC 53774 / DSM 7210 / GS-15).